Here is a 95-residue protein sequence, read N- to C-terminus: Small ribosomal subunit protein uS19 (95 aa).

Residues 73 to 95 (EFSPTRSYRGHGADKNAKGSKKK) form a disordered region.

It belongs to the universal ribosomal protein uS19 family.

Its function is as follows. Protein S19 forms a complex with S13 that binds strongly to the 16S ribosomal RNA. The polypeptide is Small ribosomal subunit protein uS19 (Deinococcus deserti (strain DSM 17065 / CIP 109153 / LMG 22923 / VCD115)).